Reading from the N-terminus, the 371-residue chain is Putative phosphoserine aminotransferase (371 aa).

R45 provides a ligand contact to L-glutamate. Positions 103, 149, 171, and 194 each coordinate pyridoxal 5'-phosphate. Residue K195 is modified to N6-(pyridoxal phosphate)lysine. N246–T247 is a pyridoxal 5'-phosphate binding site.

Belongs to the class-V pyridoxal-phosphate-dependent aminotransferase family. SerC subfamily. In terms of assembly, homodimer. The cofactor is pyridoxal 5'-phosphate.

It localises to the cytoplasm. It carries out the reaction O-phospho-L-serine + 2-oxoglutarate = 3-phosphooxypyruvate + L-glutamate. It catalyses the reaction 4-(phosphooxy)-L-threonine + 2-oxoglutarate = (R)-3-hydroxy-2-oxo-4-phosphooxybutanoate + L-glutamate. It participates in amino-acid biosynthesis; L-serine biosynthesis; L-serine from 3-phospho-D-glycerate: step 2/3. Its pathway is cofactor biosynthesis; pyridoxine 5'-phosphate biosynthesis; pyridoxine 5'-phosphate from D-erythrose 4-phosphate: step 3/5. Its function is as follows. Catalyzes the reversible conversion of 3-phosphohydroxypyruvate to phosphoserine and of 3-hydroxy-2-oxo-4-phosphonooxybutanoate to phosphohydroxythreonine. The polypeptide is Putative phosphoserine aminotransferase (Mycolicibacterium vanbaalenii (strain DSM 7251 / JCM 13017 / BCRC 16820 / KCTC 9966 / NRRL B-24157 / PYR-1) (Mycobacterium vanbaalenii)).